The chain runs to 293 residues: tRNA pseudouridine synthase B (293 aa).

The active-site Nucleophile is the Asp39.

It belongs to the pseudouridine synthase TruB family. Type 1 subfamily.

The catalysed reaction is uridine(55) in tRNA = pseudouridine(55) in tRNA. Responsible for synthesis of pseudouridine from uracil-55 in the psi GC loop of transfer RNAs. The polypeptide is tRNA pseudouridine synthase B (Rickettsia bellii (strain OSU 85-389)).